A 547-amino-acid polypeptide reads, in one-letter code: Chaperonin GroEL (547 aa).

ATP is bound by residues 30–33 (TLGP), Lys-51, 87–91 (DGTTT), Gly-415, and Asp-495. A disordered region spans residues 525–547 (PDEKEAGGGAPDMGGMGGMGGMM). Residues 531 to 547 (GGGAPDMGGMGGMGGMM) are compositionally biased toward gly residues.

It belongs to the chaperonin (HSP60) family. Forms a cylinder of 14 subunits composed of two heptameric rings stacked back-to-back. Interacts with the co-chaperonin GroES.

It localises to the cytoplasm. It carries out the reaction ATP + H2O + a folded polypeptide = ADP + phosphate + an unfolded polypeptide.. Functionally, together with its co-chaperonin GroES, plays an essential role in assisting protein folding. The GroEL-GroES system forms a nano-cage that allows encapsulation of the non-native substrate proteins and provides a physical environment optimized to promote and accelerate protein folding. The sequence is that of Chaperonin GroEL from Chromohalobacter salexigens (strain ATCC BAA-138 / DSM 3043 / CIP 106854 / NCIMB 13768 / 1H11).